A 216-amino-acid chain; its full sequence is Surface presentation of antigens protein SpaP (216 aa).

Transmembrane regions (helical) follow at residues Ile8 to Ile28, Leu52 to Tyr72, Ile153 to Leu173, and Ile183 to Leu203.

It belongs to the FliP/MopC/SpaP family.

Its subcellular location is the cell membrane. Functionally, required for surface presentation of invasion plasmid antigens. Could play a role in preserving the translocation competence of the ipa antigens. Required for invasion and for secretion of the three Ipa proteins. The protein is Surface presentation of antigens protein SpaP (spaP) of Shigella flexneri.